Consider the following 228-residue polypeptide: Superoxide dismutase [Mn], mitochondrial (228 aa).

The N-terminal 24 residues, 1–24, are a transit peptide targeting the mitochondrion; the sequence is MALRTLVSRRTLATGLGFRQQLRG. Residues His-52, His-100, Asp-189, and His-193 each coordinate Mn(2+).

This sequence belongs to the iron/manganese superoxide dismutase family. In terms of assembly, homotetramer. Mn(2+) is required as a cofactor.

Its subcellular location is the mitochondrion matrix. It catalyses the reaction 2 superoxide + 2 H(+) = H2O2 + O2. Functionally, destroys superoxide anion radicals which are normally produced within the cells and which are toxic to biological systems. This is Superoxide dismutase [Mn], mitochondrial (SODA) from Nicotiana plumbaginifolia (Leadwort-leaved tobacco).